The following is a 155-amino-acid chain: Snaclec agkicetin-C subunit alpha (155 aa).

The N-terminal stretch at 1–23 (MGRFIFVSFGLLVVFLSLSGTAA) is a signal peptide. 3 disulfides stabilise this stretch: Cys25–Cys36, Cys53–Cys149, and Cys124–Cys141. A C-type lectin domain is found at 32 to 150 (YIRFCYQPFK…CGLKHVFMCK (119 aa)).

It belongs to the snaclec family. In terms of assembly, heterodimer of subunits alpha and beta; disulfide-linked. Expressed by the venom gland.

The protein resides in the secreted. Functionally, is a potent glycoprotein Ibalpha (GP1BA) antagonist. Concentration-dependently inhibits botrocetin-, ristocetin- and low dose thrombin-induced platelet aggregation. Inhibits platelet adhesion only through inhibiting the vWF interaction with GP1BA, but has minimal effect on other platelet receptors, such as alpha-IIb/beta-3 (ITGA2B/ITGB3) or alpha-2/beta-1 (ITGA2/ITGB1). Causes an instant severe thrombocytopenia in rats and is not lethal to mice. This chain is Snaclec agkicetin-C subunit alpha, found in Deinagkistrodon acutus (Hundred-pace snake).